The sequence spans 318 residues: Transaldolase (318 aa).

Lysine 126 acts as the Schiff-base intermediate with substrate in catalysis.

This sequence belongs to the transaldolase family. Type 1 subfamily. Homodimer.

Its subcellular location is the cytoplasm. It carries out the reaction D-sedoheptulose 7-phosphate + D-glyceraldehyde 3-phosphate = D-erythrose 4-phosphate + beta-D-fructose 6-phosphate. Its pathway is carbohydrate degradation; pentose phosphate pathway; D-glyceraldehyde 3-phosphate and beta-D-fructose 6-phosphate from D-ribose 5-phosphate and D-xylulose 5-phosphate (non-oxidative stage): step 2/3. Functionally, transaldolase is important for the balance of metabolites in the pentose-phosphate pathway. The protein is Transaldolase of Cupriavidus necator (strain ATCC 17699 / DSM 428 / KCTC 22496 / NCIMB 10442 / H16 / Stanier 337) (Ralstonia eutropha).